The following is a 706-amino-acid chain: Melanopsin (706 aa).

The Extracellular segment spans residues 1–86 (MTEIPSFQPP…VWDIPPLAHY (86 aa)). N-linked (GlcNAc...) asparagine glycans are attached at residues N12, N64, and N69. The chain crosses the membrane as a helical span at residues 87-107 (IVGTAVFCIGCCGMFGNAVVV). Topologically, residues 108-121 (YSFIKSKGLRTPAN) are cytoplasmic. The helical transmembrane segment at 122 to 142 (FFIINLALSDFLMNLTNMPIF) threads the bilayer. Over 143–159 (AVNSAFQRWLLSDFACE) the chain is Extracellular. C158 and C236 form a disulfide bridge. The chain crosses the membrane as a helical span at residues 160 to 180 (LYGFAGGLFGCLSINTLMAIS). At 181–201 (MDRYLVITKPFLVMRIVTKQR) the chain is on the cytoplasmic side. A helical membrane pass occupies residues 202–222 (VMFAILLLWIWSLVWALPPLF). Residues 223–248 (GWSAYVSEGFGTSCTFDYMTPKLSYH) lie on the Extracellular side of the membrane. Residues 249 to 269 (IFTYIIFFTMYFIPGGVMIYC) form a helical membrane-spanning segment. The Cytoplasmic portion of the chain corresponds to 270–314 (YYNIFATVKSGDKQFGKAVKEMAHEDVKNKAQQERQRKNEIKTAK). A helical membrane pass occupies residues 315-335 (IAFIVISLFMSAWTPYAVVSA). At 336 to 351 (LGTLGYQDLVTPYLQS) the chain is on the extracellular side. A helical membrane pass occupies residues 352–372 (IPAMFAKSSAVYSPIVYAITY). At K358 the chain carries N6-(retinylidene)lysine. At 373-706 (PKFREAVKKH…LSEAHDETVL (334 aa)) the chain is on the cytoplasmic side. 3 disordered regions span residues 393–446 (SEEE…RQDT), 571–599 (RTES…SFNT), and 630–658 (QSSE…NETE). Composition is skewed to low complexity over residues 404–418 (QSSA…QTTA) and 426–442 (SVDS…SGVS). Over residues 571-593 (RTESGYDRSQDSQRKKVVGDTHR) the composition is skewed to basic and acidic residues. Residues 645-658 (GITEVDTDSENETE) are compositionally biased toward acidic residues.

Belongs to the G-protein coupled receptor 1 family. Opsin subfamily. Expressed in Joseph cells and photoreceptor cells of the dorsal ocelli.

The protein resides in the cell membrane. In terms of biological role, photoreceptor implicated in non-image-forming responses to light. Photoisomerizes covalently bound all-trans retinal back to 11-cis retinal. Most likely coupled to the G(q) signaling cascade. The sequence is that of Melanopsin from Branchiostoma belcheri (Amphioxus).